The primary structure comprises 290 residues: 33 kDa chaperonin (290 aa).

2 cysteine pairs are disulfide-bonded: Cys-235-Cys-237 and Cys-268-Cys-271.

This sequence belongs to the HSP33 family. In terms of processing, under oxidizing conditions two disulfide bonds are formed involving the reactive cysteines. Under reducing conditions zinc is bound to the reactive cysteines and the protein is inactive.

Its subcellular location is the cytoplasm. Functionally, redox regulated molecular chaperone. Protects both thermally unfolding and oxidatively damaged proteins from irreversible aggregation. Plays an important role in the bacterial defense system toward oxidative stress. In Streptococcus pyogenes serotype M18 (strain MGAS8232), this protein is 33 kDa chaperonin.